The sequence spans 533 residues: Acetone monooxygenase (methyl acetate-forming) (533 aa).

FAD-binding positions include 43 to 46, 55 to 56, and Tyr61; these read TWYW and DS. 53–55 serves as a coordination point for NADP(+); the sequence is RFD. NADP(+) is bound by residues 183-189, 206-207, and Trp492; these read NGATGIQ and RT.

The protein belongs to the FAD-binding monooxygenase family. In terms of assembly, homotetramer. It depends on FAD as a cofactor.

The catalysed reaction is acetone + NADPH + O2 + H(+) = methyl acetate + NADP(+) + H2O. Its function is as follows. Plays an important role in the metabolism of acetone derived from propane oxidation. Catalyzes the oxidation of acetone to methyl acetate. Exhibits high catalytic efficiency towards various linear and cyclic ketones, such as butanone, 2-pentanone, 2-heptanone, 2-octanone, 2-nonanone, 2-decanone, cyclobutanone, cyclopentanone and cyclohexanone. Elicits the highest catalytic efficiency towards butanone and cyclobutanone. Is highly specific for NADPH and cannot use NADH. The sequence is that of Acetone monooxygenase (methyl acetate-forming) from Gordonia sp. (strain TY-5).